The chain runs to 421 residues: Tol-Pal system protein TolB (421 aa).

The N-terminal stretch at 1 to 16 is a signal peptide; that stretch reads MRILVFLWLGLSSLFA.

It belongs to the TolB family. In terms of assembly, the Tol-Pal system is composed of five core proteins: the inner membrane proteins TolA, TolQ and TolR, the periplasmic protein TolB and the outer membrane protein Pal. They form a network linking the inner and outer membranes and the peptidoglycan layer.

Its subcellular location is the periplasm. Functionally, part of the Tol-Pal system, which plays a role in outer membrane invagination during cell division and is important for maintaining outer membrane integrity. This Wolinella succinogenes (strain ATCC 29543 / DSM 1740 / CCUG 13145 / JCM 31913 / LMG 7466 / NCTC 11488 / FDC 602W) (Vibrio succinogenes) protein is Tol-Pal system protein TolB.